We begin with the raw amino-acid sequence, 187 residues long: MHNEQVQGLVSHDGMTGTQAVDDMSRGFAFTSKLDAIVAWGRKNSLWPMPYGTACCGIEFMSVMGPKYDLARFGAEVARFSPRQADLLVVAGTITEKMAPVIVRIYQQMLEPKYVLSMGACASSGGFYRAYHVLQGVDKVIPVDVYIPGCPPTPEAVMDGIMALQRMIATNQPRPWKDNWKSPYEQA.

The [4Fe-4S] cluster site is built by C55, C56, C121, and C150.

It belongs to the complex I 20 kDa subunit family. As to quaternary structure, NDH-1 is composed of 14 different subunits. Subunits NuoB, C, D, E, F, and G constitute the peripheral sector of the complex. It depends on [4Fe-4S] cluster as a cofactor.

The protein resides in the cell inner membrane. It catalyses the reaction a quinone + NADH + 5 H(+)(in) = a quinol + NAD(+) + 4 H(+)(out). Its function is as follows. NDH-1 shuttles electrons from NADH, via FMN and iron-sulfur (Fe-S) centers, to quinones in the respiratory chain. The immediate electron acceptor for the enzyme in this species is believed to be ubiquinone. Couples the redox reaction to proton translocation (for every two electrons transferred, four hydrogen ions are translocated across the cytoplasmic membrane), and thus conserves the redox energy in a proton gradient. The chain is NADH-quinone oxidoreductase subunit B from Bdellovibrio bacteriovorus (strain ATCC 15356 / DSM 50701 / NCIMB 9529 / HD100).